Here is a 319-residue protein sequence, read N- to C-terminus: GTP 3',8-cyclase (319 aa).

The Radical SAM core domain occupies 4–227 (KHGRKINYLR…VETDKSSTAL (224 aa)). Arg13 provides a ligand contact to GTP. Positions 20 and 24 each coordinate [4Fe-4S] cluster. Residue Tyr26 participates in S-adenosyl-L-methionine binding. A [4Fe-4S] cluster-binding site is contributed by Cys27. Arg63 is a binding site for GTP. Residue Gly67 participates in S-adenosyl-L-methionine binding. A GTP-binding site is contributed by Thr94. S-adenosyl-L-methionine is bound at residue Ser118. Lys155 contributes to the GTP binding site. Residue Met189 participates in S-adenosyl-L-methionine binding. [4Fe-4S] cluster-binding residues include Cys249 and Cys252. Residue 254–256 (RVR) participates in GTP binding. Residue Cys266 coordinates [4Fe-4S] cluster.

This sequence belongs to the radical SAM superfamily. MoaA family. As to quaternary structure, monomer and homodimer. The cofactor is [4Fe-4S] cluster.

The catalysed reaction is GTP + AH2 + S-adenosyl-L-methionine = (8S)-3',8-cyclo-7,8-dihydroguanosine 5'-triphosphate + 5'-deoxyadenosine + L-methionine + A + H(+). The protein operates within cofactor biosynthesis; molybdopterin biosynthesis. Catalyzes the cyclization of GTP to (8S)-3',8-cyclo-7,8-dihydroguanosine 5'-triphosphate. The polypeptide is GTP 3',8-cyclase (Clostridium botulinum (strain Langeland / NCTC 10281 / Type F)).